The following is a 615-amino-acid chain: Sodium-dependent neutral amino acid transporter B(0)AT3 (615 aa).

Topologically, residues 1 to 26 (MAQASGMDPLVDIEDERPKWDNKLQY) are cytoplasmic. A helical membrane pass occupies residues 27–47 (LLSCIGFAVGLGNIWRFPYLC). Over 48–52 (QTHGG) the chain is Extracellular. A helical membrane pass occupies residues 53–73 (GAFLIPYFIALVFEGIPLFYI). Residues 74–105 (ELAIGQRLRRGSIGVWKTISPYLGGVGLGCFS) lie on the Cytoplasmic side of the membrane. The helical transmembrane segment at 106–126 (VSFLVSLYYNTVLLWVLWFFL) threads the bilayer. Residues 127–177 (NSFQHPLPWSTCPLDLNRTGFVQECQSSGTVSYFWYRQTLNITSDISNTGT) are Extracellular-facing. 2 N-linked (GlcNAc...) asparagine glycosylation sites follow: N143 and N167. A helical transmembrane segment spans residues 178 to 198 (IQWKLFLCLVACWSTVYLCVI). Over 199 to 206 (RGIESTGK) the chain is Cytoplasmic. The chain crosses the membrane as a helical span at residues 207–227 (VIYFTALFPYLVLTIFLIRGL). Residues 228-255 (TLPGATEGLIYLFTPNMKTLQNPRVWLD) lie on the Extracellular side of the membrane. Residues 256 to 276 (AATQIFFSLSLAFGGHIAFAS) form a helical membrane-spanning segment. The Cytoplasmic segment spans residues 277 to 288 (YNPPRNNCEKDA). A helical membrane pass occupies residues 289–309 (VIIALVNSMTSLYASIAIFSV). The Extracellular segment spans residues 310–397 (MGFKASNDYG…FTEAVLHMPG (88 aa)). N-linked (GlcNAc...) asparagine glycosylation occurs at N353. Residues 398 to 418 (ASVWSVLFFGMLFTLGLSSMF) form a helical membrane-spanning segment. The Cytoplasmic segment spans residues 419 to 441 (GNMEGVITPLLDMGILPKGIPKE). Residues 442-462 (VMTGVICFACFLSAICFTLQS) traverse the membrane as a helical segment. The Extracellular portion of the chain corresponds to 463-472 (GGYWLEIFDS). A helical transmembrane segment spans residues 473 to 493 (FAASLNLIIFAFMEVVGVIHI). Over 494–520 (YGMKRFCDDIEWMTGRRPGLYWQVTWR) the chain is Cytoplasmic. The helical transmembrane segment at 521–541 (VVSPMLLFGIFLSYIVLLIQT) threads the bilayer. Topologically, residues 542-570 (PPSYKAWNPQYEHFPSREEKFYPGWVQVT) are extracellular. The chain crosses the membrane as a helical span at residues 571–591 (CVLLSFLPSLWVPGVALAQLL). Residues 592 to 615 (SQYKQRWKATHLESGLKLQESRGC) are Cytoplasmic-facing.

It belongs to the sodium:neurotransmitter symporter (SNF) (TC 2.A.22) family. SLC6A18 subfamily. As to quaternary structure, interacts with CLTRN; this interaction regulates the trafficking of SLC6A18 to the cell membrane and its activity. Expressed predominantly in kidney.

It is found in the apical cell membrane. Its subcellular location is the cell membrane. The catalysed reaction is L-alanine(out) + chloride(out) + 2 Na(+)(out) = L-alanine(in) + chloride(in) + 2 Na(+)(in). It catalyses the reaction glycine(out) + chloride(out) + 2 Na(+)(out) = glycine(in) + chloride(in) + 2 Na(+)(in). The enzyme catalyses L-methionine(out) + chloride(out) + 2 Na(+)(out) = L-methionine(in) + chloride(in) + 2 Na(+)(in). It carries out the reaction L-valine(out) + chloride(out) + 2 Na(+)(out) = L-valine(in) + chloride(in) + 2 Na(+)(in). The catalysed reaction is L-isoleucine(out) + chloride(out) + 2 Na(+)(out) = L-isoleucine(in) + chloride(in) + 2 Na(+)(in). It catalyses the reaction L-serine(out) + chloride(out) + 2 Na(+)(out) = L-serine(in) + chloride(in) + 2 Na(+)(in). The enzyme catalyses L-leucine(out) + chloride(out) + 2 Na(+)(out) = L-leucine(in) + chloride(in) + 2 Na(+)(in). Its function is as follows. Symporter that transports one amino acid molecule together with two sodium and one chloride ions in kidneys and plays a role in the neutral amino acids reabsorption. Preferentially transports neutral amino acids such as L-glycine and L-alanine but also other neutral amino acids. Required CLTRN for cell surface expression and for its amino acid transporter activity. The transport mechanism is pH-independent. This Mus musculus (Mouse) protein is Sodium-dependent neutral amino acid transporter B(0)AT3.